The chain runs to 724 residues: Transcription factor dcp-66 (724 aa).

Composition is skewed to polar residues over residues 1–12 (MAQVQQVPSSPM) and 56–70 (GAST…QLSP). 2 disordered regions span residues 1–23 (MAQV…GNGL) and 55–129 (NGAS…KRRL). A compositionally biased stretch (basic and acidic residues) spans 85 to 95 (AQEKIKLKDDI). Over residues 105 to 119 (DDDDMEDEELGDEIN) the composition is skewed to acidic residues. Residues 186–216 (EEQLRERLNMRREAENQLREEEAKLLVLRKM) adopt a coiled-coil conformation. Disordered stretches follow at residues 328-361 (KELS…QITQ) and 523-590 (AAPA…QLQQ). Positions 332-358 (AAETNASASASPAVQQSQQAQQPQQAQ) are enriched in low complexity. Polar residues-rich tracts occupy residues 527–541 (TSQT…TVSS) and 551–564 (IPSS…TQAV). The span at 565-590 (KTSTPIHSTPKSSSSSAKKTAAQLQQ) shows a compositional bias: low complexity.

As to expression, expressed at low levels in excretory cell, pharynx, vulva, and posterior neurons in adults. Strongly expressed in the excretory cell and more weakly in the pharynx in larva. Embryonic expression in the excretory cell.

The protein localises to the nucleus. Transcription factor which binds to the 5'-CCATACATTA-3' motif found in the promoter region of pgp-12 and activates its expression in the excretory cell. The chain is Transcription factor dcp-66 from Caenorhabditis elegans.